Here is a 1343-residue protein sequence, read N- to C-terminus: DNA-directed RNA polymerase subunit beta (1343 aa).

The protein belongs to the RNA polymerase beta chain family. The RNAP catalytic core consists of 2 alpha, 1 beta, 1 beta' and 1 omega subunit. When a sigma factor is associated with the core the holoenzyme is formed, which can initiate transcription.

The enzyme catalyses RNA(n) + a ribonucleoside 5'-triphosphate = RNA(n+1) + diphosphate. Functionally, DNA-dependent RNA polymerase catalyzes the transcription of DNA into RNA using the four ribonucleoside triphosphates as substrates. This chain is DNA-directed RNA polymerase subunit beta, found in Shewanella woodyi (strain ATCC 51908 / MS32).